Reading from the N-terminus, the 498-residue chain is Cytochrome c-552 (498 aa).

The signal sequence occupies residues 1–31 (MKNKERKLKSWQGWLIFSSSMVVVFCLGLLA). His119 is a binding site for heme c. Positions 148, 151, and 152 each coordinate heme. Cys186, Cys189, His190, Cys228, Cys231, and His232 together coordinate heme c. Residues Glu234, Tyr235, Lys280, and Gln282 each coordinate Ca(2+). Residue Tyr235 participates in substrate binding. His283 contributes to the substrate binding site. Residues His294, Cys301, Cys304, His305, His319, Cys332, Cys335, His336, and His411 each coordinate heme c.

The protein belongs to the cytochrome c-552 family. It depends on Ca(2+) as a cofactor. Heme c serves as cofactor.

The protein localises to the periplasm. The catalysed reaction is 6 Fe(III)-[cytochrome c] + NH4(+) + 2 H2O = 6 Fe(II)-[cytochrome c] + nitrite + 8 H(+). The protein operates within nitrogen metabolism; nitrate reduction (assimilation). In terms of biological role, catalyzes the reduction of nitrite to ammonia, consuming six electrons in the process. The protein is Cytochrome c-552 of Porphyromonas gingivalis (strain ATCC BAA-308 / W83).